The primary structure comprises 230 residues: MKNLPIIALDFDSTEAVDQFLDQFNEPLFVKIGMELFYQTGPQLIASIKDRGHDIFLDLKLHDIPNTVGKAMEGLSKLNIDLVNVHAAGGTEMMKQALNGLQKHNPDIKLIAVTQLTSTTETMLHKEQNIQTSIEEAVLNYATLAQSSGLDGIVCSPLEAKLVKNELGNDFLKVTPGIRPKDASSDDQKRITTPEDAKELGSTHIVVGRPITKSENPVASYHKIKESWLG.

Residues aspartate 10, lysine 31, 58–67 (DLKLHDIPNT), threonine 117, arginine 179, glutamine 188, glycine 208, and arginine 209 each bind substrate. The active-site Proton donor is lysine 60. A disordered region spans residues 177–196 (GIRPKDASSDDQKRITTPED). The span at 179–196 (RPKDASSDDQKRITTPED) shows a compositional bias: basic and acidic residues.

Belongs to the OMP decarboxylase family. Type 1 subfamily. In terms of assembly, homodimer.

It catalyses the reaction orotidine 5'-phosphate + H(+) = UMP + CO2. It functions in the pathway pyrimidine metabolism; UMP biosynthesis via de novo pathway; UMP from orotate: step 2/2. Functionally, catalyzes the decarboxylation of orotidine 5'-monophosphate (OMP) to uridine 5'-monophosphate (UMP). This chain is Orotidine 5'-phosphate decarboxylase, found in Staphylococcus saprophyticus subsp. saprophyticus (strain ATCC 15305 / DSM 20229 / NCIMB 8711 / NCTC 7292 / S-41).